The primary structure comprises 546 residues: CTP synthase (546 aa).

Residues 1 to 266 (MTTRYIFVTG…DDLVVKRFGL (266 aa)) are amidoligase domain. Ser-14 is a CTP binding site. Ser-14 provides a ligand contact to UTP. ATP contacts are provided by residues 15 to 20 (SLGKGI) and Asp-72. 2 residues coordinate Mg(2+): Asp-72 and Glu-140. CTP-binding positions include 147 to 149 (DIE), 187 to 192 (KTKPTQ), and Lys-223. Residues 187–192 (KTKPTQ) and Lys-223 each bind UTP. 239 to 241 (KDV) is an ATP binding site. Residues 291-542 (VIGMVGKYIE…VAAASAHQKR (252 aa)) form the Glutamine amidotransferase type-1 domain. L-glutamine is bound at residue Gly-352. Cys-379 functions as the Nucleophile; for glutamine hydrolysis in the catalytic mechanism. L-glutamine is bound by residues 380 to 383 (LGMQ), Glu-403, and Arg-470. Residues His-515 and Glu-517 contribute to the active site.

This sequence belongs to the CTP synthase family. Homotetramer.

It catalyses the reaction UTP + L-glutamine + ATP + H2O = CTP + L-glutamate + ADP + phosphate + 2 H(+). It carries out the reaction L-glutamine + H2O = L-glutamate + NH4(+). The catalysed reaction is UTP + NH4(+) + ATP = CTP + ADP + phosphate + 2 H(+). The protein operates within pyrimidine metabolism; CTP biosynthesis via de novo pathway; CTP from UDP: step 2/2. Its activity is regulated as follows. Allosterically activated by GTP, when glutamine is the substrate; GTP has no effect on the reaction when ammonia is the substrate. The allosteric effector GTP functions by stabilizing the protein conformation that binds the tetrahedral intermediate(s) formed during glutamine hydrolysis. Inhibited by the product CTP, via allosteric rather than competitive inhibition. Catalyzes the ATP-dependent amination of UTP to CTP with either L-glutamine or ammonia as the source of nitrogen. Regulates intracellular CTP levels through interactions with the four ribonucleotide triphosphates. The protein is CTP synthase of Shewanella sp. (strain ANA-3).